An 813-amino-acid chain; its full sequence is Envelope glycoprotein H (813 aa).

A signal peptide spans 1-18 (MGLPGSIVFLIMIHAFCA). The Virion surface portion of the chain corresponds to 19 to 769 (KKTPTNTLPS…ESERVTIISA (751 aa)). 2 N-linked (GlcNAc...) asparagine; by host glycosylation sites follow: Asn62 and Asn116. The disordered stretch occupies residues 135-159 (DRSGLKLDDKDDAQPTGTNPPTELK). The segment covering 137 to 147 (SGLKLDDKDDA) has biased composition (basic and acidic residues). The interval 212–273 (DGAEVIMKIG…FTRRPYLIYL (62 aa)) is interaction with gL. N-linked (GlcNAc...) asparagine; by host glycosylation is found at Asn247, Asn279, Asn410, Asn434, Asn469, Asn576, Asn727, and Asn750. The helical transmembrane segment at 770-790 (TYVATATAGASIAISIAIITV) threads the bilayer. Residues 791-813 (RMIINNFRYNYHRYKKLSLYDDL) lie on the Intravirion side of the membrane.

Belongs to the herpesviridae glycoprotein H family. Interacts with glycoprotein L (gL); this interaction is necessary for the correct processing and cell surface expression of gH. The heterodimer gH/gL seems to interact with gB trimers during fusion. N-glycosylated, O-glycosylated, and sialylated.

It is found in the virion membrane. The protein resides in the host cell membrane. It localises to the host endosome membrane. In terms of biological role, the heterodimer glycoprotein H-glycoprotein L is required for the fusion of viral and plasma membranes leading to virus entry into the host cell. Following initial binding to host receptor, membrane fusion is mediated by the fusion machinery composed of gB and the heterodimer gH/gL. May also be involved in the fusion between the virion envelope and the outer nuclear membrane during virion morphogenesis. This Gallus gallus (Chicken) protein is Envelope glycoprotein H.